The primary structure comprises 260 residues: (+)-borneol dehydrogenase 1 (260 aa).

NAD(+) contacts are provided by residues 20 to 26, aspartate 44, 67 to 68, and 94 to 96; these read GGASGIG, DV, and NAG. Serine 148 serves as the catalytic Proton donor. The NAD(+) site is built by tyrosine 161, lysine 165, and threonine 196. Tyrosine 161 serves as the catalytic Proton acceptor. Lysine 165 functions as the Proton donor/acceptor in the catalytic mechanism.

The protein belongs to the short-chain dehydrogenases/reductases (SDR) family.

The catalysed reaction is (1R,2S,4R)-borneol + NAD(+) = (1R,4R)-camphor + NADH + H(+). In terms of biological role, involved in the biosynthesis of monoterpene natural products related to camphor. Catalayzes the oxidation of (+)-borneol to (+)-camphor. Shows absolute selectivity towards (+)-borneol. Catalyzes the oxidation of (+)-isoborneol to (-)-camphor. Shows absolute selectivity towards (+)-isoborneol. The sequence is that of (+)-borneol dehydrogenase 1 from Salvia officinalis (Sage).